Here is a 612-residue protein sequence, read N- to C-terminus: Elongation factor 4 (612 aa).

Residues serine 12 to threonine 194 form the tr-type G domain. Residues aspartate 24–threonine 29 and asparagine 141–aspartate 144 each bind GTP.

This sequence belongs to the TRAFAC class translation factor GTPase superfamily. Classic translation factor GTPase family. LepA subfamily.

The protein localises to the cell membrane. The enzyme catalyses GTP + H2O = GDP + phosphate + H(+). Its function is as follows. Required for accurate and efficient protein synthesis under certain stress conditions. May act as a fidelity factor of the translation reaction, by catalyzing a one-codon backward translocation of tRNAs on improperly translocated ribosomes. Back-translocation proceeds from a post-translocation (POST) complex to a pre-translocation (PRE) complex, thus giving elongation factor G a second chance to translocate the tRNAs correctly. Binds to ribosomes in a GTP-dependent manner. The sequence is that of Elongation factor 4 from Bacillus subtilis (strain 168).